The sequence spans 133 residues: Ribonuclease P protein component (133 aa).

Belongs to the RnpA family. Consists of a catalytic RNA component (M1 or rnpB) and a protein subunit.

The catalysed reaction is Endonucleolytic cleavage of RNA, removing 5'-extranucleotides from tRNA precursor.. Its function is as follows. RNaseP catalyzes the removal of the 5'-leader sequence from pre-tRNA to produce the mature 5'-terminus. It can also cleave other RNA substrates such as 4.5S RNA. The protein component plays an auxiliary but essential role in vivo by binding to the 5'-leader sequence and broadening the substrate specificity of the ribozyme. The polypeptide is Ribonuclease P protein component (Pseudomonas entomophila (strain L48)).